A 464-amino-acid polypeptide reads, in one-letter code: Argininosuccinate lyase (464 aa).

It belongs to the lyase 1 family. Argininosuccinate lyase subfamily.

Its subcellular location is the cytoplasm. The enzyme catalyses 2-(N(omega)-L-arginino)succinate = fumarate + L-arginine. It functions in the pathway amino-acid biosynthesis; L-arginine biosynthesis; L-arginine from L-ornithine and carbamoyl phosphate: step 3/3. This is Argininosuccinate lyase from Janthinobacterium sp. (strain Marseille) (Minibacterium massiliensis).